Consider the following 443-residue polypeptide: Phosphoglucosamine mutase (443 aa).

The active-site Phosphoserine intermediate is serine 102. 4 residues coordinate Mg(2+): serine 102, aspartate 241, aspartate 243, and aspartate 245. Residue serine 102 is modified to Phosphoserine.

Belongs to the phosphohexose mutase family. Requires Mg(2+) as cofactor. Post-translationally, activated by phosphorylation.

The catalysed reaction is alpha-D-glucosamine 1-phosphate = D-glucosamine 6-phosphate. Catalyzes the conversion of glucosamine-6-phosphate to glucosamine-1-phosphate. The chain is Phosphoglucosamine mutase from Polaromonas naphthalenivorans (strain CJ2).